Reading from the N-terminus, the 228-residue chain is uncharacterized protein (228 aa).

It is found in the mitochondrion. This is an uncharacterized protein from Emericella nidulans (Aspergillus nidulans).